Reading from the N-terminus, the 230-residue chain is Cytidylate kinase (230 aa).

12–20 is an ATP binding site; the sequence is GPSGAGKGT.

It belongs to the cytidylate kinase family. Type 1 subfamily.

The protein resides in the cytoplasm. The catalysed reaction is CMP + ATP = CDP + ADP. It carries out the reaction dCMP + ATP = dCDP + ADP. This Shewanella pealeana (strain ATCC 700345 / ANG-SQ1) protein is Cytidylate kinase.